The chain runs to 258 residues: Ubiquinone/menaquinone biosynthesis C-methyltransferase UbiE (258 aa).

Residues threonine 81, aspartate 102, and 130–131 contribute to the S-adenosyl-L-methionine site; that span reads NA.

This sequence belongs to the class I-like SAM-binding methyltransferase superfamily. MenG/UbiE family.

It catalyses the reaction a 2-demethylmenaquinol + S-adenosyl-L-methionine = a menaquinol + S-adenosyl-L-homocysteine + H(+). The catalysed reaction is a 2-methoxy-6-(all-trans-polyprenyl)benzene-1,4-diol + S-adenosyl-L-methionine = a 5-methoxy-2-methyl-3-(all-trans-polyprenyl)benzene-1,4-diol + S-adenosyl-L-homocysteine + H(+). It functions in the pathway quinol/quinone metabolism; menaquinone biosynthesis; menaquinol from 1,4-dihydroxy-2-naphthoate: step 2/2. The protein operates within cofactor biosynthesis; ubiquinone biosynthesis. In terms of biological role, methyltransferase required for the conversion of demethylmenaquinol (DMKH2) to menaquinol (MKH2) and the conversion of 2-polyprenyl-6-methoxy-1,4-benzoquinol (DDMQH2) to 2-polyprenyl-3-methyl-6-methoxy-1,4-benzoquinol (DMQH2). The sequence is that of Ubiquinone/menaquinone biosynthesis C-methyltransferase UbiE from Sinorhizobium fredii (strain NBRC 101917 / NGR234).